A 443-amino-acid polypeptide reads, in one-letter code: Two-pore potassium channel 2 (443 aa).

Over 1–144 (MANDGNGDNN…KTDQQSDSKT (144 aa)) the chain is Cytoplasmic. The interval 67 to 109 (SLPIDALSQNPSTSSSATTSFSDSTDLLLPLTEPNKPVRKSKP) is disordered. Positions 72-98 (ALSQNPSTSSSATTSFSDSTDLLLPLT) are enriched in low complexity. Residues 145 to 165 (IVNQAVALLVVYLSLGVLIYW) form a helical membrane-spanning segment. An intramembrane region (pore-forming) is located at residues 181-200 (DALYFCIVTMCTIGYGDITP). A helical transmembrane segment spans residues 208-228 (FSIFFVLVGFGFMDILLSGMV). Over 229–274 (TYVLDLQENYMLETARNESLNLNDRDKVRSYIIDVKKGRMRIRLKV) the chain is Cytoplasmic. Residues 275–295 (GLALGVVVLCLGFGVLIMHFV) traverse the membrane as a helical segment. Positions 302–321 (DSFYFSVMSVTTVGYGDRAF) form an intramembrane region, pore-forming. The helical transmembrane segment at 328-348 (LLAAMWLLVSTLAVARAILFL) threads the bilayer. At 349–443 (AESRVDKRNR…TKDLPTATSI (95 aa)) the chain is on the cytoplasmic side. 2 EF-hand domains span residues 365 to 400 (LGESMSISQFLDADIDCNGCVSKAEFVIYKLKKMDK) and 404 to 439 (KDINPIGFQFDKLDRTNSGRITLLDLLESSTKDLPT). The Ca(2+) site is built by Asp-378, Asp-380, Asn-382, Cys-384, Glu-389, Asp-417, Ser-421, Arg-423, and Asp-428.

This sequence belongs to the two pore domain potassium channel (TC 1.A.1.7) family. As to quaternary structure, homodimer. In terms of tissue distribution, expressed in roots, stems, leaves and flowers.

The protein localises to the vacuole membrane. Probable voltage-independent potassium-selective tonoplast ion channel. The polypeptide is Two-pore potassium channel 2 (TPK2) (Arabidopsis thaliana (Mouse-ear cress)).